The primary structure comprises 311 residues: Olfactory receptor 1L4 (311 aa).

Residues 1-26 (METKNYSSSTSGFILLGLSSNPKLQK) lie on the Extracellular side of the membrane. N5 is a glycosylation site (N-linked (GlcNAc...) asparagine). The chain crosses the membrane as a helical span at residues 27–50 (PLFAIFLIMYLLTAVGNVLIILAI). Residues 51-58 (YSDPRLHT) are Cytoplasmic-facing. A helical transmembrane segment spans residues 59 to 80 (PMYFFLSNLSFMDICFTTVIVP). The Extracellular segment spans residues 81–101 (KMLVNFLSETKIISYVGCLIQ). The cysteines at positions 98 and 190 are disulfide-linked. Residues 102-121 (MYFFMAFGNTDSYLLASMAI) form a helical membrane-spanning segment. The Cytoplasmic segment spans residues 122–140 (DRLVAICNPLHYDVVMKPW). Residues 141–159 (HCLLMLLGSCSISHLHSLF) form a helical membrane-spanning segment. The Extracellular segment spans residues 160-197 (RVLLMSRLSFCASHIIKHFFCDTQPVLKLSCSDTSSSQ). A helical membrane pass occupies residues 198 to 220 (MVVMTETLAVIVTPFLCTIFSYL). Residues 221–237 (QIIVTVLRIPSAAGKWK) lie on the Cytoplasmic side of the membrane. The helical transmembrane segment at 238 to 260 (AFSTCGSHLTVVVLFYGSVIYVY) threads the bilayer. At 261–273 (FRPLSMYSVMKGR) the chain is on the extracellular side. The helical transmembrane segment at 274-293 (VATVMYTVVTPMLNPFIYSL) threads the bilayer. Residues 294 to 311 (RNKDMKRGLKKLRHRIYS) lie on the Cytoplasmic side of the membrane.

Belongs to the G-protein coupled receptor 1 family.

It is found in the cell membrane. Odorant receptor. The sequence is that of Olfactory receptor 1L4 (OR1L4) from Homo sapiens (Human).